Reading from the N-terminus, the 120-residue chain is Large ribosomal subunit protein bL19 (120 aa).

It belongs to the bacterial ribosomal protein bL19 family.

Functionally, this protein is located at the 30S-50S ribosomal subunit interface and may play a role in the structure and function of the aminoacyl-tRNA binding site. This is Large ribosomal subunit protein bL19 from Kocuria rhizophila (strain ATCC 9341 / DSM 348 / NBRC 103217 / DC2201).